The following is a 614-amino-acid chain: Acetylcholinesterase (614 aa).

An N-terminal signal peptide occupies residues 1–31 (MRPPWYPLHTPSLAFPLLFLLLSLLGGGARA). Residues C100 and C127 are joined by a disulfide bond. S234 functions as the Acyl-ester intermediate in the catalytic mechanism. An intrachain disulfide couples C288 to C303. A glycan (N-linked (GlcNAc...) asparagine) is linked at N296. E365 (charge relay system) is an active-site residue. N381 carries N-linked (GlcNAc...) asparagine glycosylation. An intrachain disulfide couples C440 to C560. The active-site Charge relay system is the H478. N495 is a glycosylation site (N-linked (GlcNAc...) asparagine).

It belongs to the type-B carboxylesterase/lipase family. In terms of assembly, isoform H generates GPI-anchored dimers; disulfide linked. Isoform T generates multiple structures, ranging from monomers and dimers to collagen-tailed and hydrophobic-tailed forms, in which catalytic tetramers are associated with anchoring proteins that attach them to the basal lamina or to cell membranes. In the collagen-tailed forms, isoform T subunits are associated with a specific collagen, COLQ, which triggers the formation of isoform T tetramers, from monomers and dimers. Interacts with PRIMA1. The interaction with PRIMA1 is required to anchor it to the basal lamina of cells and organize into tetramers. In terms of tissue distribution, predominates in most expressing tissues except erythrocytes where a glycophospholipid-attached form of ACHE predominates.

Its subcellular location is the synapse. The protein resides in the secreted. It localises to the cell membrane. The catalysed reaction is acetylcholine + H2O = choline + acetate + H(+). Functionally, terminates signal transduction at the neuromuscular junction by rapid hydrolysis of the acetylcholine released into the synaptic cleft. The polypeptide is Acetylcholinesterase (Ache) (Mus musculus (Mouse)).